The sequence spans 148 residues: Large ribosomal subunit protein bL9 (148 aa).

This sequence belongs to the bacterial ribosomal protein bL9 family.

Functionally, binds to the 23S rRNA. In Hydrogenobaculum sp. (strain Y04AAS1), this protein is Large ribosomal subunit protein bL9.